Here is a 155-residue protein sequence, read N- to C-terminus: DNA gyrase inhibitor (155 aa).

Belongs to the DNA gyrase inhibitor family. Interacts with DNA gyrase.

Its subcellular location is the cytoplasm. In terms of biological role, inhibits the supercoiling activity of DNA gyrase. Acts by inhibiting DNA gyrase at an early step, prior to (or at the step of) binding of DNA by the gyrase. It protects cells against toxins that target DNA gyrase, by inhibiting activity of these toxins and reducing the formation of lethal double-strand breaks in the cell. The chain is DNA gyrase inhibitor from Edwardsiella piscicida.